Consider the following 64-residue polypeptide: Conotoxin VnMRCL-04 (64 aa).

The signal sequence occupies residues 1-22 (MRCLPVFVILLLLIASAPSVDA). Positions 23-48 (RPKTKDDVPLASFHGNAERTLLNILR) are excised as a propeptide. A Tryptophan amide modification is found at W63.

Belongs to the conotoxin T superfamily. Contains 2 disulfide bonds that can be either 'C1-C3, C2-C4' or 'C1-C4, C2-C3', since these disulfide connectivities have been observed for conotoxins with cysteine framework V (for examples, see AC P0DQQ7 and AC P81755). As to expression, expressed by the venom duct.

It localises to the secreted. The polypeptide is Conotoxin VnMRCL-04 (Conus ventricosus (Mediterranean cone)).